The following is a 402-amino-acid chain: Zinc finger protein 322 (402 aa).

A C2H2-type 1; atypical zinc finger spans residues 43–65; the sequence is YQCLECKQNFCENLALIMCERTH. 8 consecutive C2H2-type zinc fingers follow at residues 71–93, 99–121, 127–149, 155–177, 183–205, 211–233, 239–261, and 267–289; these read YKCD…QRIH, YKCS…QRTH, YTCD…QRSH, YLCS…RRTH, FKCL…QRTH, YKCN…KRVH, YKCG…QRVH, and YKCL…QATH. Residues 293 to 315 form a C2H2-type 10; degenerate zinc finger; the sequence is FKCLEYEKSFNCSSDLIVHQRIH. The C2H2-type 11; degenerate zinc-finger motif lies at 351-373; sequence YKYTVCDKSFHQSSALLQHQTVH. Ser-391 is modified (phosphoserine).

Belongs to the krueppel C2H2-type zinc-finger protein family. In terms of assembly, interacts with POU5F1.

The protein localises to the cytoplasm. Its subcellular location is the nucleus. Functionally, transcriptional activator. Important for maintenance of pluripotency in embryonic stem cells. Binds directly to the POU5F1 distal enhancer and the NANOG proximal promoter, and enhances expression of both genes. Can also bind to numerous other gene promoters and regulates expression of many other pluripotency factors, either directly or indirectly. Promotes inhibition of MAPK signaling during embryonic stem cell differentiation. The protein is Zinc finger protein 322 (ZNF322) of Macaca fascicularis (Crab-eating macaque).